A 299-amino-acid chain; its full sequence is Ribosomal protein L11 methyltransferase (299 aa).

Threonine 150, glycine 171, aspartate 193, and asparagine 234 together coordinate S-adenosyl-L-methionine.

It belongs to the methyltransferase superfamily. PrmA family.

Its subcellular location is the cytoplasm. It catalyses the reaction L-lysyl-[protein] + 3 S-adenosyl-L-methionine = N(6),N(6),N(6)-trimethyl-L-lysyl-[protein] + 3 S-adenosyl-L-homocysteine + 3 H(+). Methylates ribosomal protein L11. The sequence is that of Ribosomal protein L11 methyltransferase from Dictyoglomus turgidum (strain DSM 6724 / Z-1310).